A 554-amino-acid chain; its full sequence is Dihydroxy-acid dehydratase (554 aa).

Residue Asp78 participates in Mg(2+) binding. Cys119 is a binding site for [2Fe-2S] cluster. Mg(2+) is bound by residues Asp120 and Lys121. Lys121 is modified (N6-carboxylysine). Residue Cys191 participates in [2Fe-2S] cluster binding. Glu444 provides a ligand contact to Mg(2+). The active-site Proton acceptor is Ser470.

The protein belongs to the IlvD/Edd family. As to quaternary structure, homodimer. [2Fe-2S] cluster is required as a cofactor. It depends on Mg(2+) as a cofactor.

It catalyses the reaction (2R)-2,3-dihydroxy-3-methylbutanoate = 3-methyl-2-oxobutanoate + H2O. It carries out the reaction (2R,3R)-2,3-dihydroxy-3-methylpentanoate = (S)-3-methyl-2-oxopentanoate + H2O. It participates in amino-acid biosynthesis; L-isoleucine biosynthesis; L-isoleucine from 2-oxobutanoate: step 3/4. Its pathway is amino-acid biosynthesis; L-valine biosynthesis; L-valine from pyruvate: step 3/4. In terms of biological role, functions in the biosynthesis of branched-chain amino acids. Catalyzes the dehydration of (2R,3R)-2,3-dihydroxy-3-methylpentanoate (2,3-dihydroxy-3-methylvalerate) into 2-oxo-3-methylpentanoate (2-oxo-3-methylvalerate) and of (2R)-2,3-dihydroxy-3-methylbutanoate (2,3-dihydroxyisovalerate) into 2-oxo-3-methylbutanoate (2-oxoisovalerate), the penultimate precursor to L-isoleucine and L-valine, respectively. In Nitratidesulfovibrio vulgaris (strain ATCC 29579 / DSM 644 / CCUG 34227 / NCIMB 8303 / VKM B-1760 / Hildenborough) (Desulfovibrio vulgaris), this protein is Dihydroxy-acid dehydratase.